Consider the following 610-residue polypeptide: Propanediol dehydratase-reactivating factor large subunit (610 aa).

11–13 contacts ATP; sequence NSS. Positions 105, 166, and 183 each coordinate Mg(2+). Residues 459–462, 557–558, and Arg-591 contribute to the ATP site; these read EEIK and GS.

It belongs to the DdrA/PduG family. Forms a heterotetramer PduG(2)/PduH(2). Mg(2+) serves as cofactor.

It localises to the bacterial microcompartment. The catalysed reaction is ATP + H2O = ADP + phosphate + H(+). The protein operates within polyol metabolism; 1,2-propanediol degradation. Its function is as follows. Large subunit of the propanediol dehydratase-reactivating factor (DDR), which reactivates suicidally inhibited adenosylcobalamin-dependent propanediol dehydratase (diol dehydratase, DDH) found in the bacterial microcompartment (BMC) dedicated to 1,2-propanediol (1,2-PD) degradation. Reactivates inactivated DDH in the presence of ATP, Mg(2+) and free adenosylcobalamin (AdoCbl), by mediating the exchange of the tightly bound damaged cofactor AdoCbl for a free intact one. This subunit contains the adenosine nucleotide binding site. Expression of a cosmid containing the full 21-gene pdu operon in E.coli allows E.coli to grow on 1,2-propanediol (1,2-PD) with the appearance of bacterial microcompartments (BMC) in its cytoplasm. Functionally, the 1,2-PD-specific bacterial microcompartment (BMC) concentrates low levels of 1,2-PD catabolic enzymes, concentrates volatile reaction intermediates thus enhancing pathway flux and keeps the level of toxic, mutagenic propionaldehyde low. The protein is Propanediol dehydratase-reactivating factor large subunit of Citrobacter freundii.